The chain runs to 70 residues: DNA-directed RNA polymerase subunit omega (70 aa).

It belongs to the RNA polymerase subunit omega family. In terms of assembly, the RNAP catalytic core consists of 2 alpha, 1 beta, 1 beta' and 1 omega subunit. When a sigma factor is associated with the core the holoenzyme is formed, which can initiate transcription.

The catalysed reaction is RNA(n) + a ribonucleoside 5'-triphosphate = RNA(n+1) + diphosphate. Functionally, promotes RNA polymerase assembly. Latches the N- and C-terminal regions of the beta' subunit thereby facilitating its interaction with the beta and alpha subunits. This chain is DNA-directed RNA polymerase subunit omega, found in Thermoanaerobacter pseudethanolicus (strain ATCC 33223 / 39E) (Clostridium thermohydrosulfuricum).